We begin with the raw amino-acid sequence, 107 residues long: Protein Asterix (107 aa).

The segment covering 1–15 (MSHSHGNASSVNDPR) has biased composition (polar residues). The disordered stretch occupies residues 1–25 (MSHSHGNASSVNDPRQPSAAKPYIP). The chain crosses the membrane as a helical span at residues 82-98 (ISMAMMFAIMGLVTNYL).

This sequence belongs to the Asterix family.

It localises to the membrane. This Arabidopsis thaliana (Mouse-ear cress) protein is Protein Asterix.